Consider the following 241-residue polypeptide: Proteasome subunit alpha (241 aa).

The protein belongs to the peptidase T1A family. In terms of assembly, the 20S proteasome core is composed of 14 alpha and 14 beta subunits that assemble into four stacked heptameric rings, resulting in a barrel-shaped structure. The two inner rings, each composed of seven catalytic beta subunits, are sandwiched by two outer rings, each composed of seven alpha subunits. The catalytic chamber with the active sites is on the inside of the barrel. Has a gated structure, the ends of the cylinder being occluded by the N-termini of the alpha-subunits. Is capped by the proteasome-associated ATPase, ARC.

It localises to the cytoplasm. Its pathway is protein degradation; proteasomal Pup-dependent pathway. Its activity is regulated as follows. The formation of the proteasomal ATPase ARC-20S proteasome complex, likely via the docking of the C-termini of ARC into the intersubunit pockets in the alpha-rings, may trigger opening of the gate for substrate entry. Interconversion between the open-gate and close-gate conformations leads to a dynamic regulation of the 20S proteasome proteolysis activity. Functionally, component of the proteasome core, a large protease complex with broad specificity involved in protein degradation. This Parafrankia sp. (strain EAN1pec) protein is Proteasome subunit alpha.